The chain runs to 218 residues: uncharacterized protein (218 aa).

Positions 111-193 (NSIYLVEGDF…ITKVIEIKAA (83 aa)) constitute a Toprim domain.

This is an uncharacterized protein from Mycoplasma genitalium (strain ATCC 33530 / DSM 19775 / NCTC 10195 / G37) (Mycoplasmoides genitalium).